A 268-amino-acid chain; its full sequence is MAVNVYSTSVTSDNLSRHDMLAWINESLQLNLTKIEQLCSGAAYCQFMDMLFPGSIALKKVKFQAKLEHEYIQNFKILQAGFKRMGVDKIIPVDKLVKGKFQDNFEFVQWFKKFFDANYDGKEYDPVAARQGQETAVAPSLVAPALSKPKKPLGSSTAAPQRPIATQRTTAAPKAGPGMVRKNPGVGNGDDEAAELMQQVKVLKLTVEDLEKERDFYFGKLRNIELICQENEGENDPVLQRIVDILYATDEGFVIPDEGGPQEEQEEY.

Residue Ala2 is modified to N-acetylalanine. The 103-residue stretch at 14–116 (NLSRHDMLAW…FVQWFKKFFD (103 aa)) folds into the Calponin-homology (CH) domain. At Lys66 the chain carries N6-crotonyllysine. Phosphotyrosine is present on Tyr124. The tract at residues 124 to 268 (YDPVAARQGQ…GGPQEEQEEY (145 aa)) is interaction with MTUS2/TIP150. A disordered region spans residues 146-180 (LSKPKKPLGSSTAAPQRPIATQRTTAAPKAGPGMV). The segment covering 154–170 (GSSTAAPQRPIATQRTT) has biased composition (polar residues). Phosphoserine is present on Ser155. In terms of domain architecture, EB1 C-terminal spans 185-255 (GVGNGDDEAA…LYATDEGFVI (71 aa)). An interaction with APC region spans residues 206-211 (TVEDLE). Residues 208–268 (EDLEKERDFY…GGPQEEQEEY (61 aa)) are DCTN1-binding. The residue at position 220 (Lys220) is an N6-acetyllysine. The APC-binding stretch occupies residues 220-242 (KLRNIELICQENEGENDPVLQRI). An interaction with SKA1 region spans residues 232–255 (EGENDPVLQRIVDILYATDEGFVI).

It belongs to the MAPRE family. In terms of assembly, homodimer. Heterodimer with MAPRE3. Interacts (via C-terminal residues 206-211) with APC (via C-terminal residues 2674-2845); the interaction inhibits association with and bundling of F-actin. Interacts with DCTN1, DIAPH1 and DIAPH2. Interacts with DCTN2, TERF1 and dynein intermediate chain. Interacts with CLASP2, DST, KIF2C and STIM1; probably required for their targeting to the growing microtubule plus ends. Interacts with MTUS2; interaction is direct and probably targets MTUS2 to microtubules. Interacts (via C-terminus) with SKA1 (via SXIP motif); the interaction is direct and stabilizes the kinetochore-microtubule attachment of the SKA1 complex. Interacts with APC2. Interacts with CLASP1. Interacts (via C-terminus) with CLIP1. Interacts with SLAIN2 and SLAIN1. Interacts with MACF1. Interacts with KIF18B; this interaction is required for efficient accumulation of KIF18B at microtubule plus ends. Interacts with MISP. Interacts with RABL2/RABL2A; binds preferentially to GTP-bound RABL2. Interacts with KCNAB2. Interacts with KNSTRN. Interacts with NCKAP5L. Interacts with AKAP9. Interacts with PDE4DIP isoform 2/MMG8/SMYLE; this interaction is required for its recruitment to the Golgi apparatus. May form a pericentrosomal complex with AKAP9, CDK5RAP2 and PDE4DIP isoform 2/MMG8/SMYLE; within this complex, MAPRE1 binding to CDK5RAP2 may be mediated by PDE4DIP. Contrary to other mammalian species, does not interact with CDK5RAP2, possibly due to the lack of conservation of the MAPRE1-binding motif in mouse CDK5RAP2. Interacts with AKNA. Interacts with GAS2L1, GAS2L2, and GAS2L3. Interacts with RARRES1 and AGBL2. Post-translationally, acetylation at Lys-220 by KAT2B/PCAF promotes dynamic kinetochore-microtubule interactions in early mitosis. Crotonylated by KAT5 during mitosis, promoting astral microtubule plasticity and dynamic connection between astral microtubules and the cortex during mitotic chromosome segregation, thereby ensuring accurate spindle positioning in mitosis. Decrotonylated by HDAC3. In terms of tissue distribution, expressed within the midpiece of sperm tail (at protein level).

The protein localises to the cytoplasm. The protein resides in the cytoskeleton. Its subcellular location is the microtubule organizing center. It is found in the centrosome. It localises to the spindle. The protein localises to the spindle pole. In terms of biological role, plus-end tracking protein (+TIP) that binds to the plus-end of microtubules and regulates the dynamics of the microtubule cytoskeleton. Recruits other +TIP proteins to microtubules by binding to a conserved Ser-X-Leu-Pro (SXLP) motif in their polypeptide chains. Promotes cytoplasmic microtubule nucleation and elongation. Involved in mitotic spindle positioning by stabilizing microtubules and promoting dynamic connection between astral microtubules and the cortex during mitotic chromosome segregation. Assists chromosome alignment in metaphase by recruiting the SKA complex to the spindle and stabilizing its interactions with microtubule bundles (K-fibers). Also acts as a regulator of minus-end microtubule organization: interacts with the complex formed by AKAP9 and PDE4DIP, leading to recruit CAMSAP2 to the Golgi apparatus, thereby tethering non-centrosomal minus-end microtubules to the Golgi, an important step for polarized cell movement. Promotes elongation of CAMSAP2-decorated microtubule stretches on the minus-end of microtubules. Acts as a regulator of autophagosome transport via interaction with CAMSAP2. Functions downstream of Rho GTPases and DIAPH1 in stable microtubule formation. May play a role in cell migration. This is Microtubule-associated protein RP/EB family member 1 (Mapre1) from Mus musculus (Mouse).